The primary structure comprises 516 residues: tRNA-guanine(15) transglycosylase (516 aa).

The Nucleophile role is filled by D93. 2 residues coordinate substrate: D128 and A196. Zn(2+)-binding residues include C279, C281, and C284. The span at 488–502 shows a compositional bias: low complexity; sequence LSAVSERLGDEASVG. The segment at 488-516 is disordered; that stretch reads LSAVSERLGDEASVGGDDGDDGGSASSAE.

It belongs to the archaeosine tRNA-ribosyltransferase family. Zn(2+) serves as cofactor.

The catalysed reaction is guanosine(15) in tRNA + 7-cyano-7-deazaguanine = 7-cyano-7-carbaguanosine(15) in tRNA + guanine. Its pathway is tRNA modification; archaeosine-tRNA biosynthesis. In terms of biological role, exchanges the guanine residue with 7-cyano-7-deazaguanine (preQ0) at position 15 in the dihydrouridine loop (D-loop) of archaeal tRNAs. In Haloferax volcanii (strain ATCC 29605 / DSM 3757 / JCM 8879 / NBRC 14742 / NCIMB 2012 / VKM B-1768 / DS2) (Halobacterium volcanii), this protein is tRNA-guanine(15) transglycosylase.